A 1385-amino-acid chain; its full sequence is L-2-aminoadipate reductase large subunit (1385 aa).

In terms of domain architecture, Carrier spans 843–920; it reads SSFSPLEQEI…ELAKEISRVR (78 aa). O-(pantetheine 4'-phosphoryl)serine is present on Ser-880.

The protein belongs to the ATP-dependent AMP-binding enzyme family. As to quaternary structure, heterodimer of an alpha and a beta subunit. Pantetheine 4'-phosphate is required as a cofactor.

The catalysed reaction is (S)-2-amino-6-oxohexanoate + NADP(+) + H2O = L-2-aminoadipate + NADPH + 2 H(+). It catalyses the reaction (S)-2-amino-6-oxohexanoate + NAD(+) + H2O = L-2-aminoadipate + NADH + 2 H(+). It carries out the reaction (S)-2-amino-6-oxohexanoate + AMP + diphosphate + NADP(+) = L-2-aminoadipate + ATP + NADPH + H(+). The protein operates within amino-acid biosynthesis; L-lysine biosynthesis via AAA pathway; L-lysine from L-alpha-aminoadipate (fungal route): step 1/3. Its function is as follows. Catalyzes the activation of alpha-aminoadipate by ATP-dependent adenylation and the reduction of activated alpha-aminoadipate by NADPH. The activated alpha-aminoadipate is bound to the phosphopantheinyl group of the enzyme itself before it is reduced to (S)-2-amino-6-oxohexanoate. This chain is L-2-aminoadipate reductase large subunit (LYS2), found in Eremothecium gossypii (strain ATCC 10895 / CBS 109.51 / FGSC 9923 / NRRL Y-1056) (Yeast).